A 142-amino-acid polypeptide reads, in one-letter code: Phenylalanine ammonia-lyase (142 aa).

Residues Lys66, Glu94, and Asn97 each contribute to the (E)-cinnamate site.

The protein belongs to the PAL/histidase family. As to quaternary structure, homotetramer. Contains an active site 4-methylidene-imidazol-5-one (MIO), which is formed autocatalytically by cyclization and dehydration of residues Ala-Ser-Gly.

Its subcellular location is the cytoplasm. The catalysed reaction is L-phenylalanine = (E)-cinnamate + NH4(+). It functions in the pathway phenylpropanoid metabolism; trans-cinnamate biosynthesis; trans-cinnamate from L-phenylalanine: step 1/1. Functionally, catalyzes the non-oxidative deamination of L-phenylalanine to form trans-cinnamic acid and a free ammonium ion. Facilitates the commitment step in phenylpropanoid pathways that produce secondary metabolites such as lignins, coumarins and flavonoids. This chain is Phenylalanine ammonia-lyase (palA), found in Agaricus bisporus (White button mushroom).